A 358-amino-acid chain; its full sequence is DNA polymerase IV (358 aa).

One can recognise a UmuC domain in the interval 6 to 187; sequence IIHIDMDYFF…LDIGDFPGVG (182 aa). 2 residues coordinate Mg(2+): D10 and D105. E106 is a catalytic residue.

It belongs to the DNA polymerase type-Y family. In terms of assembly, monomer. Mg(2+) serves as cofactor.

The protein localises to the cytoplasm. The enzyme catalyses DNA(n) + a 2'-deoxyribonucleoside 5'-triphosphate = DNA(n+1) + diphosphate. In terms of biological role, poorly processive, error-prone DNA polymerase involved in untargeted mutagenesis. Copies undamaged DNA at stalled replication forks, which arise in vivo from mismatched or misaligned primer ends. These misaligned primers can be extended by PolIV. Exhibits no 3'-5' exonuclease (proofreading) activity. May be involved in translesional synthesis, in conjunction with the beta clamp from PolIII. The polypeptide is DNA polymerase IV (Staphylococcus haemolyticus (strain JCSC1435)).